A 285-amino-acid chain; its full sequence is Heme oxygenase 3, chloroplastic (285 aa).

The N-terminal 58 residues, 1–58 (MATTRLNPSCHFPASTRLSCESYLGLRTTGRISYARTLTAPRGYLAVKANGGQASVVT), are a transit peptide targeting the chloroplast. His89 provides a ligand contact to heme b. Residues 89–105 (HTKDQAREGEKESRSPE) are compositionally biased toward basic and acidic residues. The segment at 89–109 (HTKDQAREGEKESRSPEEGPV) is disordered.

Belongs to the heme oxygenase family. In terms of tissue distribution, widely expressed at low levels.

The protein resides in the plastid. Its subcellular location is the chloroplast. The catalysed reaction is heme b + 3 reduced [NADPH--hemoprotein reductase] + 3 O2 = biliverdin IXalpha + CO + Fe(2+) + 3 oxidized [NADPH--hemoprotein reductase] + 3 H2O + H(+). Its function is as follows. Catalyzes the opening of the heme ring to form the open-chain tetrapyrrole biliverdin IX with the release of iron and carbon monoxide (CO). Produces specifically the biliverdin IX-alpha isomer. Plays a minor role in phytochrome assembly and photomorphogenesis. In Arabidopsis thaliana (Mouse-ear cress), this protein is Heme oxygenase 3, chloroplastic (HO3).